Reading from the N-terminus, the 570-residue chain is Chaperonin GroEL 1 (570 aa).

ATP-binding positions include 42-45, Lys63, 99-103, Gly427, and Asp507; these read TLGP and DGTTT. Residues 537-570 form a disordered region; it reads EDEDDDDGGGGGGGGMPAGGAGGMGGMGGMGGMM. Over residues 545-570 the composition is skewed to gly residues; that stretch reads GGGGGGGMPAGGAGGMGGMGGMGGMM.

The protein belongs to the chaperonin (HSP60) family. In terms of assembly, forms a cylinder of 14 subunits composed of two heptameric rings stacked back-to-back. Interacts with the co-chaperonin GroES.

The protein resides in the cytoplasm. The enzyme catalyses ATP + H2O + a folded polypeptide = ADP + phosphate + an unfolded polypeptide.. Its function is as follows. Together with its co-chaperonin GroES, plays an essential role in assisting protein folding. The GroEL-GroES system forms a nano-cage that allows encapsulation of the non-native substrate proteins and provides a physical environment optimized to promote and accelerate protein folding. The chain is Chaperonin GroEL 1 from Salinibacter ruber (strain DSM 13855 / M31).